The chain runs to 676 residues: Envelope glycoprotein (676 aa).

The signal sequence occupies residues 1-32 (MEGLSLLQLPRDKFRKSSFFVWVIILFQKAFS). The Extracellular portion of the chain corresponds to 33–650 (MPLGVVTNST…DDNWWTGWRQ (618 aa)). Residue N40 is glycosylated (N-linked (GlcNAc...) asparagine; by host). Intrachain disulfides connect C53–C609, C108–C135, C121–C147, C511–C556, and C601–C608. The tract at residues 54–201 (KDHLASTDQL…TFLQSPPIRE (148 aa)) is receptor-binding. N-linked (GlcNAc...) asparagine; by host glycosylation is found at N204, N208, N238, N257, N268, N296, and N314. The segment at 305–485 (ELSFETLSLN…STSNGLITST (181 aa)) is mucin-like region. The disordered stretch occupies residues 312-351 (SLNETEDDDATSSRTTKGRISDRATRKYSDLVPKDSPGMV). Residues 330 to 344 (RISDRATRKYSDLVP) are compositionally biased toward basic and acidic residues. N-linked (GlcNAc...) asparagine; by host glycosylation occurs at N366. Residues 406 to 458 (SSSQILSSSPTMAPSPETQTSTTYTPKLPVMTTEEPTTPPRNSPGSTTEAPTL) form a disordered region. Composition is skewed to polar residues over residues 415–430 (PTMA…TTYT) and 448–458 (SPGSTTEAPTL). N-linked (GlcNAc...) asparagine; by host glycosylation occurs at N463. A fusion peptide region spans residues 524-539 (HNAAGIAWIPYFGPGA). The stretch at 554 to 595 (LVCGLRQLANETTQALQLFLRATTELRTYTILNRKAIDFLLR) forms a coiled coil. A glycan (N-linked (GlcNAc...) asparagine; by host) is linked at N563. Residues 615 to 634 (WTKNITDKINQIIHDFIDNP) adopt a coiled-coil conformation. N-linked (GlcNAc...) asparagine; by host glycosylation is present at N618. The helical transmembrane segment at 651–671 (WIPAGIGITGIIIAIIALLCV) threads the bilayer. 2 S-palmitoyl cysteine; by host lipidation sites follow: C670 and C672. Residues 672–676 (CKLLC) lie on the Cytoplasmic side of the membrane.

It belongs to the filoviruses glycoprotein family. In terms of assembly, homotrimer; each monomer consists of a GP1 and a GP2 subunit linked by disulfide bonds. The resulting peplomers (GP1,2) protrude from the virus surface as spikes. Interacts with host integrin alpha-V/ITGAV. Interacts with host CLEC10A. Binds also to host CD209 and CLEC4M/DC-SIGN(R). Interacts with host FOLR1. Interacts with BST2; this interaction inhibits the antiviral effect of BST2 and this allows viral release from infected cells. Interacts with host FCN1; this interaction enhances viral entry. Interacts with host TLR4; this interaction induces cell death in T-lymphocytes or proinflammatory cytokines and SOCS1 production in monocytes. Interacts with host entry receptor NPC1. As to quaternary structure, GP1 and GP2delta are part of GP1,2delta soluble complexes released by ectodomain shedding. The signal peptide region modulates GP's high mannose glycosylation, thereby determining the efficiency of the interactions with DC-SIGN(R). In terms of processing, N-glycosylated. Post-translationally, O-glycosylated in the mucin-like region. Palmitoylation of GP2 is not required for its function. In terms of processing, specific enzymatic cleavages in vivo yield mature proteins. The precursor is processed into GP1 and GP2 by host cell furin in the trans Golgi, and maybe by other host proteases, to yield the mature GP1 and GP2 proteins. The cleavage site corresponds to the furin optimal cleavage sequence [KR]-X-[KR]-R. This cleavage does not seem to be required for function. After the internalization of the virus into cell endosomes, GP1 C-terminus is removed by the endosomal proteases cathepsin B, cathepsin L, or both, leaving a 19-kDa N-terminal fragment which is further digested by cathepsin B. Proteolytic processing of GP1,2 by host ADAM17 can remove the transmembrane anchor of GP2 and leads to shedding of complexes consisting in GP1 and truncated GP2 (GP1,2delta).

It localises to the virion membrane. The protein resides in the host cell membrane. The protein localises to the secreted. Trimeric GP1,2 complexes form the virion surface spikes and mediate the viral entry processes, with GP1 acting as the receptor-binding subunit and GP2 as the membrane fusion subunit. At later times of infection, down-regulates the expression of various host cell surface molecules that are essential for immune surveillance and cell adhesion. Down-modulates several integrins including ITGA1, ITGA2, ITGA3, ITGA4, ITGA5, ITGA6, ITGAV and ITGB1. This decrease in cell adhesion molecules may lead to cell detachment, contributing to the disruption of blood vessel integrity and hemorrhages developed during infection (cytotoxicity). Interacts with host TLR4 and thereby stimulates the differentiation and activation of monocytes leading to bystander death of T-lymphocytes. Down-regulates as well the function of host natural killer cells. Counteracts the antiviral effect of host BST2/tetherin that restricts release of progeny virions from infected cells. However, cooperates with VP40 and host BST2 to activate canonical NF-kappa-B pathway in a manner dependent on neddylation. Functionally, functions as a decoy for anti-GP1,2 antibodies thereby contributing to viral immune evasion. Interacts and activates host macrophages and dendritic cells inducing up-regulation of cytokine transcription. This effect is mediated throught activation of host TLR4. In terms of biological role, responsible for binding to the receptor(s) on target cells. Interacts with CD209/DC-SIGN and CLEC4M/DC-SIGNR which act as cofactors for virus entry into dendritic cells (DCs) and endothelial cells. Binding to the macrophage specific lectin CLEC10A also seems to enhance virus infectivity. Interaction with FOLR1/folate receptor alpha may be a cofactor for virus entry in some cell types, although results are contradictory. Members of the Tyro3 receptor tyrosine kinase family also seem to be cell entry factors in filovirus infection. Once attached, the virions are internalized through clathrin-dependent endocytosis and/or macropinocytosis. After internalization of the virus into the endosomes of the host cell, proteolysis of GP1 by two cysteine proteases, CTSB/cathepsin B and CTSL/cathepsin L removes the glycan cap and allows GP1 binding to the host entry receptor NPC1. NPC1-binding, Ca(2+) and acidic pH induce a conformational change of GP2, which unmasks its fusion peptide and permit membranes fusion. Its function is as follows. Acts as a class I viral fusion protein. Under the current model, the protein has at least 3 conformational states: pre-fusion native state, pre-hairpin intermediate state, and post-fusion hairpin state. During viral and target cell membrane fusion, the coiled coil regions (heptad repeats) assume a trimer-of-hairpins structure, positioning the fusion peptide in close proximity to the C-terminal region of the ectodomain. The formation of this structure appears to drive apposition and subsequent fusion of viral and target cell membranes. Responsible for penetration of the virus into the cell cytoplasm by mediating the fusion of the membrane of the endocytosed virus particle with the endosomal membrane. Low pH in endosomes induces an irreversible conformational change in GP2, releasing the fusion hydrophobic peptide. This chain is Envelope glycoprotein (GP), found in Sudan ebolavirus (strain Maleo-79) (SEBOV).